A 120-amino-acid polypeptide reads, in one-letter code: Large ribosomal subunit protein uL18c (120 aa).

The protein belongs to the universal ribosomal protein uL18 family. In terms of assembly, part of the 50S ribosomal subunit; contacts the 5S rRNA.

The protein localises to the plastid. Its subcellular location is the chloroplast. Its function is as follows. Binds 5S rRNA, forms part of the central protuberance of the 50S subunit. The polypeptide is Large ribosomal subunit protein uL18c (rpl18) (Pyropia yezoensis (Susabi-nori)).